Reading from the N-terminus, the 183-residue chain is uncharacterized protein (183 aa).

This is an uncharacterized protein from Treponema pallidum (strain Nichols).